Here is a 202-residue protein sequence, read N- to C-terminus: Peptidyl-tRNA hydrolase (202 aa).

TRNA is bound at residue Tyr19. Residue His24 is the Proton acceptor of the active site. Residues Tyr70, Asn72, and Asn118 each coordinate tRNA.

Belongs to the PTH family. As to quaternary structure, monomer.

The protein localises to the cytoplasm. It carries out the reaction an N-acyl-L-alpha-aminoacyl-tRNA + H2O = an N-acyl-L-amino acid + a tRNA + H(+). Functionally, hydrolyzes ribosome-free peptidyl-tRNAs (with 1 or more amino acids incorporated), which drop off the ribosome during protein synthesis, or as a result of ribosome stalling. Its function is as follows. Catalyzes the release of premature peptidyl moieties from peptidyl-tRNA molecules trapped in stalled 50S ribosomal subunits, and thus maintains levels of free tRNAs and 50S ribosomes. The protein is Peptidyl-tRNA hydrolase of Prochlorococcus marinus (strain NATL1A).